The following is a 297-amino-acid chain: Pyrroline-5-carboxylate reductase 1 (297 aa).

It belongs to the pyrroline-5-carboxylate reductase family.

The protein localises to the cytoplasm. It carries out the reaction L-proline + NADP(+) = (S)-1-pyrroline-5-carboxylate + NADPH + 2 H(+). The catalysed reaction is L-proline + NAD(+) = (S)-1-pyrroline-5-carboxylate + NADH + 2 H(+). It participates in amino-acid biosynthesis; L-proline biosynthesis; L-proline from L-glutamate 5-semialdehyde: step 1/1. In terms of biological role, catalyzes the reduction of 1-pyrroline-5-carboxylate (PCA) to L-proline. This chain is Pyrroline-5-carboxylate reductase 1 (proH), found in Bacillus spizizenii (strain ATCC 23059 / NRRL B-14472 / W23) (Bacillus subtilis subsp. spizizenii).